A 478-amino-acid polypeptide reads, in one-letter code: Early growth response protein 4 (478 aa).

The tract at residues 15-37 is disordered; that stretch reads SKPTEGCAHTSPELPRLPARDAP. 3 consecutive C2H2-type zinc fingers follow at residues 372-396, 402-424, and 430-452; these read FACP…LRIH, FQCR…VRTH, and FACD…SKVH.

It belongs to the EGR C2H2-type zinc-finger protein family.

The protein resides in the nucleus. Functionally, transcriptional regulator. Recognizes and binds to the DNA sequence 5'-GCGGGGGCG-3' (GSG). Activates the transcription of target genes whose products are required for mitogenesis and differentiation. The chain is Early growth response protein 4 (Egr4) from Rattus norvegicus (Rat).